We begin with the raw amino-acid sequence, 245 residues long: MRVIKVGGSVVPMLDKILDTSSLHGNSIIVHGGSRYVDEMARKLGVKVERLVSPSGVMFRRTTRRVLDVYVAALMRANRELVSFLRERGIDAIGVSGLDGVVLAKRKKLVKAVVNGKVIAIRDDYSGVIKSINVTLLKNYLKVGIPVIASIAYDPEENVPLNVDGDKVAYHVAIAMKAKELRFLSDTAFLIDGNVVERIPLEDFDEYLRYAGGGMKKKLMMARKALESGVKKVVIEGLNGRTVIS.

Substrate-binding residues include R60 and N162.

Belongs to the acetylglutamate kinase family. LysZ subfamily.

Its subcellular location is the cytoplasm. It carries out the reaction [amino-group carrier protein]-C-terminal-N-(1,4-dicarboxybutan-1-yl)-L-glutamine + ATP = [amino-group carrier protein]-C-terminal-N-(1-carboxy-5-phosphooxy-5-oxopentan-1-yl)-L-glutamine + ADP. The enzyme catalyses [amino-group carrier protein]-C-terminal-gamma-(L-glutamyl)-L-glutamate + ATP = [amino-group carrier protein]-C-terminal-gamma-(5-phospho-L-glutamyl)-L-glutamate + ADP. It participates in amino-acid biosynthesis; L-lysine biosynthesis via AAA pathway; L-lysine from L-alpha-aminoadipate (Thermus route): step 2/5. Its pathway is amino-acid biosynthesis; L-arginine biosynthesis. Involved in both the arginine and lysine biosynthetic pathways. Phosphorylates the LysW-bound precursors glutamate (for arginine biosynthesis), respectively alpha-aminoadipate (for lysine biosynthesis). The sequence is that of Putative [LysW]-aminoadipate/[LysW]-glutamate kinase from Pyrococcus abyssi (strain GE5 / Orsay).